A 155-amino-acid polypeptide reads, in one-letter code: Endoribonuclease YbeY (155 aa).

Positions 114, 118, and 124 each coordinate Zn(2+).

This sequence belongs to the endoribonuclease YbeY family. Requires Zn(2+) as cofactor.

It localises to the cytoplasm. In terms of biological role, single strand-specific metallo-endoribonuclease involved in late-stage 70S ribosome quality control and in maturation of the 3' terminus of the 16S rRNA. The polypeptide is Endoribonuclease YbeY (Proteus mirabilis (strain HI4320)).